The primary structure comprises 461 residues: Protein YIG1 (461 aa).

Residues 58-80 (SNVGEDGGDVGNYSEEDDDGDEE) form a disordered region. Acidic residues predominate over residues 71–80 (SEEDDDGDEE).

Its subcellular location is the cytoplasm. The protein localises to the nucleus. Its function is as follows. Involved in the regulation of anaerobiotic glycerol metabolism. The protein is Protein YIG1 (YIG1) of Saccharomyces cerevisiae (strain ATCC 204508 / S288c) (Baker's yeast).